The primary structure comprises 156 residues: Small ribosomal subunit protein eS10 (156 aa).

A disordered region spans residues 91 to 156 (LKRQTRPEAA…FGRGRQEQEE (66 aa)). Residues 95–119 (TRPEAARPRPKEGAPRAQVGEDRAG) show a composition bias toward basic and acidic residues.

This sequence belongs to the eukaryotic ribosomal protein eS10 family.

The protein resides in the cytoplasm. This chain is Small ribosomal subunit protein eS10 (RPS10), found in Lumbricus rubellus (Humus earthworm).